Reading from the N-terminus, the 437-residue chain is Transcription factor 12 (437 aa).

3 disordered regions span residues 1-68, 80-123, and 244-335; these read EFHD…QTGD, PDHT…YENS, and ASNT…ERRM. Polar residues predominate over residues 13–37; that stretch reads VSPTDISTSLPPMSSFHRGSTSSSP. Position 44 is a phosphothreonine (Thr-44). A Phosphoserine modification is found at Ser-64. Positions 83–94 are enriched in low complexity; it reads TSSSFPSNPSTP. Composition is skewed to polar residues over residues 95 to 107 and 114 to 123; these read VGSP…TSQW and APSSPSYENS. Composition is skewed to basic and acidic residues over residues 273 to 285 and 291 to 306; these read IKTE…ENLH and DDMK…DIKV. Lys-274 participates in a covalent cross-link: Glycyl lysine isopeptide (Lys-Gly) (interchain with G-Cter in SUMO2). Ser-295 is modified (phosphoserine). Lys-305 is covalently cross-linked (Glycyl lysine isopeptide (Lys-Gly) (interchain with G-Cter in SUMO2)). Thr-312 carries the phosphothreonine modification. A phosphoserine mark is found at Ser-313 and Ser-314. Positions 323–335 are enriched in basic and acidic residues; sequence PEQKIEREKERRM. Residues 332 to 385 form the bHLH domain; that stretch reads ERRMANNARERLRVRDINEAFKELGRMCQLHLKSEKPQTKLLILHQAVAVILSL. Residues Lys-364 and Lys-408 each participate in a glycyl lysine isopeptide (Lys-Gly) (interchain with G-Cter in SUMO2) cross-link. Residues 387 to 410 are class A specific domain; it reads QQVRERNLNPKAACLKRREEEKVS. Residues 405-437 are disordered; the sequence is EEEKVSAASAEPPTTLPGTHPGLSETTNPMGHL. Over residues 416–427 the composition is skewed to low complexity; the sequence is PPTTLPGTHPGL. A compositionally biased stretch (polar residues) spans 428-437; sequence SETTNPMGHL.

As to quaternary structure, efficient DNA binding requires dimerization with another bHLH protein. Forms homo- or heterooligomers with myogenin, E12 and ITF2 proteins. Interacts with NEUROD2. Interacts with PTF1A. Interacts with RUNX1T1. Interacts with BHLHA9.

Its subcellular location is the nucleus. Functionally, transcriptional regulator. Involved in the initiation of neuronal differentiation. Activates transcription by binding to the E box (5'-CANNTG-3'). Participates in the control of inducible RP4 gene expression in salivary cells. Binds to the RIPE3 element of the insulin II promoter. May be involved in the functional network that regulates the development of the GnRH axis. In Mesocricetus auratus (Golden hamster), this protein is Transcription factor 12 (TCF12).